A 234-amino-acid polypeptide reads, in one-letter code: Lipoprotein-releasing system ATP-binding protein LolD (234 aa).

The ABC transporter domain maps to L7–A233. An ATP-binding site is contributed by G43–S50.

Belongs to the ABC transporter superfamily. Lipoprotein translocase (TC 3.A.1.125) family. In terms of assembly, the complex is composed of two ATP-binding proteins (LolD) and two transmembrane proteins (LolC and LolE).

The protein resides in the cell inner membrane. Functionally, part of the ABC transporter complex LolCDE involved in the translocation of mature outer membrane-directed lipoproteins, from the inner membrane to the periplasmic chaperone, LolA. Responsible for the formation of the LolA-lipoprotein complex in an ATP-dependent manner. In Yersinia pestis bv. Antiqua (strain Antiqua), this protein is Lipoprotein-releasing system ATP-binding protein LolD.